The chain runs to 378 residues: Tetraacyldisaccharide 4'-kinase (378 aa).

Residue 63–70 (AVGGAGKT) participates in ATP binding.

This sequence belongs to the LpxK family.

It carries out the reaction a lipid A disaccharide + ATP = a lipid IVA + ADP + H(+). It functions in the pathway glycolipid biosynthesis; lipid IV(A) biosynthesis; lipid IV(A) from (3R)-3-hydroxytetradecanoyl-[acyl-carrier-protein] and UDP-N-acetyl-alpha-D-glucosamine: step 6/6. Functionally, transfers the gamma-phosphate of ATP to the 4'-position of a tetraacyldisaccharide 1-phosphate intermediate (termed DS-1-P) to form tetraacyldisaccharide 1,4'-bis-phosphate (lipid IVA). In Anaeromyxobacter dehalogenans (strain 2CP-C), this protein is Tetraacyldisaccharide 4'-kinase.